The chain runs to 134 residues: MGSLNVSIVTPDGPVYEGVAQMVIARTKAGELGILPGHVPLVAPLKIDIVRLKVESGEEWVAVNGGFMEVNGEEVNILADTAEREQDIDIDRAEKAKQRAEEELSRAKEQKVDEVMAQLALQRAINRIHAKEHN.

This sequence belongs to the ATPase epsilon chain family. In terms of assembly, F-type ATPases have 2 components, CF(1) - the catalytic core - and CF(0) - the membrane proton channel. CF(1) has five subunits: alpha(3), beta(3), gamma(1), delta(1), epsilon(1). CF(0) has three main subunits: a, b and c.

It is found in the cell membrane. Its function is as follows. Produces ATP from ADP in the presence of a proton gradient across the membrane. This chain is ATP synthase epsilon chain, found in Listeria monocytogenes serotype 4b (strain F2365).